The primary structure comprises 67 residues: DNA-directed RNA polymerase subunit omega (67 aa).

It belongs to the RNA polymerase subunit omega family. The RNAP catalytic core consists of 2 alpha, 1 beta, 1 beta' and 1 omega subunit. When a sigma factor is associated with the core the holoenzyme is formed, which can initiate transcription.

It carries out the reaction RNA(n) + a ribonucleoside 5'-triphosphate = RNA(n+1) + diphosphate. Functionally, promotes RNA polymerase assembly. Latches the N- and C-terminal regions of the beta' subunit thereby facilitating its interaction with the beta and alpha subunits. The protein is DNA-directed RNA polymerase subunit omega of Listeria innocua serovar 6a (strain ATCC BAA-680 / CLIP 11262).